The sequence spans 422 residues: MIVRVSQTGPVDAAFPAPPSKSYTHRALIAGALALGRTRIARPLRAADTELTARGLEALGVPLEWLPGEIAVAGCSGTFPAAGEVTIDCGNSGTTLRLLTSAALLSQHPVVLTGSPRMLERPVGPLAGALRALGGDVAFTGQPGYPPIRISGRLRGGRATIDGSISSQFVSSILMAAPYAEEDVELTLPATPASRSYLDVTADVMLRFGAHIERQGYDRFRVESGRAYRGRDYRVEGDYSSASYLFAVAAVCGGRVAVTGLNPTSVQGDRRFLDALEAMGCSVAAGTDAVTVERTGDLKGIEIDMSSSPDTVQTLAAVAATAGSPTTITGTAHLQYKESDRVGVTADTLRRMGAGVEVTEDSLTITPAPLHGVAVDPHDDHRTAMAFAVLGLAVGGMAIRDPECVEKSFPGFWEALYGEGLL.

3-phosphoshikimate contacts are provided by lysine 21, serine 22, and arginine 26. Lysine 21 is a binding site for phosphoenolpyruvate. Residues glycine 93 and arginine 121 each coordinate phosphoenolpyruvate. 6 residues coordinate 3-phosphoshikimate: serine 166, serine 167, glutamine 168, serine 194, aspartate 310, and lysine 337. A phosphoenolpyruvate-binding site is contributed by glutamine 168. Aspartate 310 acts as the Proton acceptor in catalysis. The phosphoenolpyruvate site is built by arginine 341, arginine 382, and lysine 407.

This sequence belongs to the EPSP synthase family. Monomer.

Its subcellular location is the cytoplasm. The catalysed reaction is 3-phosphoshikimate + phosphoenolpyruvate = 5-O-(1-carboxyvinyl)-3-phosphoshikimate + phosphate. The protein operates within metabolic intermediate biosynthesis; chorismate biosynthesis. Its function is as follows. Catalyzes the transfer of the enolpyruvyl moiety of phosphoenolpyruvate (PEP) to the 5-hydroxyl of shikimate-3-phosphate (S3P) to produce enolpyruvyl shikimate-3-phosphate and inorganic phosphate. The protein is 3-phosphoshikimate 1-carboxyvinyltransferase of Methanoculleus marisnigri (strain ATCC 35101 / DSM 1498 / JR1).